The chain runs to 562 residues: Glutamyl-tRNA(Gln) amidotransferase subunit B, chloroplastic/mitochondrial (562 aa).

Positions 48–76 are disordered; sequence SVASNSKREPRPVKTRVMTQERGSGETQT. A compositionally biased stretch (polar residues) spans 64–76; it reads VMTQERGSGETQT.

Belongs to the GatB/GatE family. GatB subfamily. Subunit of the heterotrimeric GatCAB amidotransferase (AdT) complex, composed of A, B and C subunits.

It is found in the mitochondrion. Its subcellular location is the plastid. It localises to the chloroplast. It carries out the reaction L-glutamyl-tRNA(Gln) + L-glutamine + ATP + H2O = L-glutaminyl-tRNA(Gln) + L-glutamate + ADP + phosphate + H(+). Its function is as follows. Allows the formation of correctly charged Gln-tRNA(Gln) through the transamidation of misacylated Glu-tRNA(Gln) in chloroplasts and mitochondria. The reaction takes place in the presence of glutamine and ATP through an activated gamma-phospho-Glu-tRNA(Gln). The sequence is that of Glutamyl-tRNA(Gln) amidotransferase subunit B, chloroplastic/mitochondrial from Physcomitrium patens (Spreading-leaved earth moss).